We begin with the raw amino-acid sequence, 464 residues long: Phosphoglucosamine mutase (464 aa).

Serine 112 acts as the Phosphoserine intermediate in catalysis. 4 residues coordinate Mg(2+): serine 112, aspartate 252, aspartate 254, and aspartate 256. A Phosphoserine modification is found at serine 112.

This sequence belongs to the phosphohexose mutase family. Mg(2+) is required as a cofactor. Post-translationally, activated by phosphorylation.

The enzyme catalyses alpha-D-glucosamine 1-phosphate = D-glucosamine 6-phosphate. Functionally, catalyzes the conversion of glucosamine-6-phosphate to glucosamine-1-phosphate. The chain is Phosphoglucosamine mutase from Synechococcus sp. (strain CC9605).